A 216-amino-acid polypeptide reads, in one-letter code: Thiamine-phosphate synthase (216 aa).

Residues 40 to 44 (QLRIK) and N72 contribute to the 4-amino-2-methyl-5-(diphosphooxymethyl)pyrimidine site. Mg(2+) contacts are provided by D73 and D92. S111 is a 4-amino-2-methyl-5-(diphosphooxymethyl)pyrimidine binding site. Residue 137 to 139 (TTT) coordinates 2-[(2R,5Z)-2-carboxy-4-methylthiazol-5(2H)-ylidene]ethyl phosphate. K140 contributes to the 4-amino-2-methyl-5-(diphosphooxymethyl)pyrimidine binding site. Residues G169 and 189-190 (VS) each bind 2-[(2R,5Z)-2-carboxy-4-methylthiazol-5(2H)-ylidene]ethyl phosphate.

Belongs to the thiamine-phosphate synthase family. It depends on Mg(2+) as a cofactor.

The catalysed reaction is 2-[(2R,5Z)-2-carboxy-4-methylthiazol-5(2H)-ylidene]ethyl phosphate + 4-amino-2-methyl-5-(diphosphooxymethyl)pyrimidine + 2 H(+) = thiamine phosphate + CO2 + diphosphate. It catalyses the reaction 2-(2-carboxy-4-methylthiazol-5-yl)ethyl phosphate + 4-amino-2-methyl-5-(diphosphooxymethyl)pyrimidine + 2 H(+) = thiamine phosphate + CO2 + diphosphate. It carries out the reaction 4-methyl-5-(2-phosphooxyethyl)-thiazole + 4-amino-2-methyl-5-(diphosphooxymethyl)pyrimidine + H(+) = thiamine phosphate + diphosphate. It functions in the pathway cofactor biosynthesis; thiamine diphosphate biosynthesis; thiamine phosphate from 4-amino-2-methyl-5-diphosphomethylpyrimidine and 4-methyl-5-(2-phosphoethyl)-thiazole: step 1/1. In terms of biological role, condenses 4-methyl-5-(beta-hydroxyethyl)thiazole monophosphate (THZ-P) and 2-methyl-4-amino-5-hydroxymethyl pyrimidine pyrophosphate (HMP-PP) to form thiamine monophosphate (TMP). The protein is Thiamine-phosphate synthase of Photorhabdus laumondii subsp. laumondii (strain DSM 15139 / CIP 105565 / TT01) (Photorhabdus luminescens subsp. laumondii).